Reading from the N-terminus, the 149-residue chain is Arginine repressor (149 aa).

It belongs to the ArgR family.

The protein resides in the cytoplasm. It functions in the pathway amino-acid biosynthesis; L-arginine biosynthesis [regulation]. In terms of biological role, regulates arginine biosynthesis genes. The sequence is that of Arginine repressor from Bacillus mycoides (strain KBAB4) (Bacillus weihenstephanensis).